A 288-amino-acid polypeptide reads, in one-letter code: Ribosomal RNA small subunit methyltransferase I (288 aa).

Belongs to the methyltransferase superfamily. RsmI family.

The protein resides in the cytoplasm. The catalysed reaction is cytidine(1402) in 16S rRNA + S-adenosyl-L-methionine = 2'-O-methylcytidine(1402) in 16S rRNA + S-adenosyl-L-homocysteine + H(+). Functionally, catalyzes the 2'-O-methylation of the ribose of cytidine 1402 (C1402) in 16S rRNA. This chain is Ribosomal RNA small subunit methyltransferase I, found in Vibrio cholerae serotype O1 (strain ATCC 39315 / El Tor Inaba N16961).